We begin with the raw amino-acid sequence, 66 residues long: Large ribosomal subunit protein bL31 (66 aa).

Zn(2+) contacts are provided by Cys-16, Cys-18, Cys-36, and Cys-39.

It belongs to the bacterial ribosomal protein bL31 family. Type A subfamily. Part of the 50S ribosomal subunit. Zn(2+) serves as cofactor.

Functionally, binds the 23S rRNA. This chain is Large ribosomal subunit protein bL31, found in Campylobacter lari (strain RM2100 / D67 / ATCC BAA-1060).